Here is a 484-residue protein sequence, read N- to C-terminus: tRNA sulfurtransferase (484 aa).

In terms of domain architecture, THUMP spans 63–167; sequence REMIERLTCT…LDRLFVIHRQ (105 aa). ATP is bound by residues 185–186, Lys267, Gly289, and Gln298; that span reads LM. Residues Cys346 and Cys457 are joined by a disulfide bond. In terms of domain architecture, Rhodanese spans 405–483; it reads VLPGQIVIDI…GHTNVRVYRP (79 aa). Cys457 functions as the Cysteine persulfide intermediate in the catalytic mechanism.

Belongs to the ThiI family.

It is found in the cytoplasm. It catalyses the reaction [ThiI sulfur-carrier protein]-S-sulfanyl-L-cysteine + a uridine in tRNA + 2 reduced [2Fe-2S]-[ferredoxin] + ATP + H(+) = [ThiI sulfur-carrier protein]-L-cysteine + a 4-thiouridine in tRNA + 2 oxidized [2Fe-2S]-[ferredoxin] + AMP + diphosphate. It carries out the reaction [ThiS sulfur-carrier protein]-C-terminal Gly-Gly-AMP + S-sulfanyl-L-cysteinyl-[cysteine desulfurase] + AH2 = [ThiS sulfur-carrier protein]-C-terminal-Gly-aminoethanethioate + L-cysteinyl-[cysteine desulfurase] + A + AMP + 2 H(+). It functions in the pathway cofactor biosynthesis; thiamine diphosphate biosynthesis. Functionally, catalyzes the ATP-dependent transfer of a sulfur to tRNA to produce 4-thiouridine in position 8 of tRNAs, which functions as a near-UV photosensor. Also catalyzes the transfer of sulfur to the sulfur carrier protein ThiS, forming ThiS-thiocarboxylate. This is a step in the synthesis of thiazole, in the thiamine biosynthesis pathway. The sulfur is donated as persulfide by IscS. This is tRNA sulfurtransferase from Pseudomonas aeruginosa (strain UCBPP-PA14).